The following is a 275-amino-acid chain: Tryptophan synthase alpha chain (275 aa).

Residues E49 and D60 each act as proton acceptor in the active site.

This sequence belongs to the TrpA family. As to quaternary structure, tetramer of two alpha and two beta chains.

It catalyses the reaction (1S,2R)-1-C-(indol-3-yl)glycerol 3-phosphate + L-serine = D-glyceraldehyde 3-phosphate + L-tryptophan + H2O. The protein operates within amino-acid biosynthesis; L-tryptophan biosynthesis; L-tryptophan from chorismate: step 5/5. The alpha subunit is responsible for the aldol cleavage of indoleglycerol phosphate to indole and glyceraldehyde 3-phosphate. This Nitrosomonas europaea (strain ATCC 19718 / CIP 103999 / KCTC 2705 / NBRC 14298) protein is Tryptophan synthase alpha chain.